A 92-amino-acid polypeptide reads, in one-letter code: N(2)-fixation sustaining protein CowN (92 aa).

It belongs to the CowN family.

Its function is as follows. Is required to sustain N(2)-dependent growth in the presence of low levels of carbon monoxide (CO). Probably acts by protecting the N(2) fixation ability of the nitrogenase complex, which is inactivated in the presence of CO. The sequence is that of N(2)-fixation sustaining protein CowN from Cereibacter sphaeroides (strain ATCC 17025 / ATH 2.4.3) (Rhodobacter sphaeroides).